Here is a 318-residue protein sequence, read N- to C-terminus: MARRPKGRFIDGIVLLDKSTGMSSNFALQRVKRFFNANKAGHTGALDPLATGMLPVCLGEATKFSQHLLDADKRYLVTAKLGERTDTSDSDGEVVQTRPVTFTEAQLLSALEHFRGDTQQVPSMYSALKYQGQPLYKYAREGIEVPRESRPITVFELNFISLEGDELTLDIHCSKGTYIRTIIDDLGEMLGCGAHVIMLRRTQVAQYPYAKMVTLEQLEALVTQAHEQQIDPSVLLDPLLLPMDTAVADFPEVNVPEASAAYLMQGQAVRVTGLKADTLVRITLGDAHRFVGIGAMNDDGLLAPKRLIVIHDEPIVTD.

Asp-47 (nucleophile) is an active-site residue.

Belongs to the pseudouridine synthase TruB family. Type 1 subfamily.

It catalyses the reaction uridine(55) in tRNA = pseudouridine(55) in tRNA. Functionally, responsible for synthesis of pseudouridine from uracil-55 in the psi GC loop of transfer RNAs. This Shewanella putrefaciens (strain CN-32 / ATCC BAA-453) protein is tRNA pseudouridine synthase B.